The chain runs to 209 residues: Neurotrophin-4 (209 aa).

A signal peptide spans 1–21 (MLPRHSCSLLLFLLLLPSVPM). Residues 22 to 79 (EPQPPSSTLPPFLAPEWDLLSPRVALSRGTPAGPPLLFLLEAGAYGEPAGAPANRSRR) constitute a propeptide that is removed on maturation. An N-linked (GlcNAc...) asparagine glycan is attached at asparagine 75. Intrachain disulfides connect cysteine 96–cysteine 169, cysteine 140–cysteine 198, and cysteine 157–cysteine 200.

This sequence belongs to the NGF-beta family. In terms of tissue distribution, expressed in thymus, muscle, ovary, brain, heart, stomach and kidney. Expressed in both embryo and adult tissues.

It localises to the secreted. Target-derived survival factor for peripheral sensory sympathetic neurons. May promote ameloblast differentiation and subsequent reduction in proliferation of ameloblasts. The protein is Neurotrophin-4 (Ntf4) of Rattus norvegicus (Rat).